The primary structure comprises 1204 residues: Cingulin (1204 aa).

Positions 7-357 (MAEPRGPVDH…GVISSGSSKA (351 aa)) are head. The disordered stretch occupies residues 25–48 (EPVSGAEMGTLRRGGRRPAKDARA). Positions 48–62 (ASTYGVAVRVQGIAG) match the ZIM motif. An interaction with TJP1/ZO1 region spans residues 54 to 67 (AVRVQGIAGQPFVV). 2 disordered regions span residues 68–174 (LNSG…DTAP) and 186–266 (DGQL…FSRA). Polar residues predominate over residues 93 to 119 (ALSSDSELPENPYSQVQGFPAPSQSST). 10 positions are modified to phosphoserine: Ser-95, Ser-96, Ser-98, Ser-135, Ser-137, Ser-140, Ser-155, Ser-165, Ser-214, and Ser-217. Over residues 207 to 231 (EQRKRSKSLDSRLPRDTLEERERQS) the composition is skewed to basic and acidic residues. Polar residues predominate over residues 232 to 245 (TNHWNPSTKYNNHV). Positions 247–261 (SLKQPAQSPSPSPLS) are enriched in low complexity. Phosphoserine is present on residues Ser-258, Ser-276, Ser-338, and Ser-351. The stretch at 358 to 1161 (MAGQGELARK…SLEKDSWRKA (804 aa)) forms a coiled coil. Positions 379–398 (VKKRQKLEPSRAGLERQLEE) are disordered. Lys-579 carries the N6-acetyllysine modification. Positions 1161 to 1182 (ASRSAAESALKHEGLSSDEEFD) are disordered. The tail stretch occupies residues 1162–1204 (SRSAAESALKHEGLSSDEEFDSVYDPSSIASLLTESNLQTSSC). Phosphoserine occurs at positions 1176, 1177, and 1183.

It belongs to the cingulin family. Homodimer. Interacts with TJP1/ZO1 and SPEF1.

It is found in the cell junction. The protein localises to the tight junction. Functionally, probably plays a role in the formation and regulation of the tight junction (TJ) paracellular permeability barrier. The chain is Cingulin from Plecturocebus moloch (Dusky titi monkey).